The chain runs to 675 residues: Methionine--tRNA ligase (675 aa).

Residues 15 to 25 carry the 'HIGH' region motif; the sequence is PYANGPIHLGH. The Zn(2+) site is built by C146, C149, C159, and C162. A 'KMSKS' region motif is present at residues 332–336; sequence KMSKS. An ATP-binding site is contributed by K335. The tRNA-binding domain occupies 574–675; that stretch reads DFAKIDLRVA…AGAKPGMRVK (102 aa).

The protein belongs to the class-I aminoacyl-tRNA synthetase family. MetG type 1 subfamily. Homodimer. It depends on Zn(2+) as a cofactor.

It is found in the cytoplasm. The enzyme catalyses tRNA(Met) + L-methionine + ATP = L-methionyl-tRNA(Met) + AMP + diphosphate. Functionally, is required not only for elongation of protein synthesis but also for the initiation of all mRNA translation through initiator tRNA(fMet) aminoacylation. The protein is Methionine--tRNA ligase of Shewanella amazonensis (strain ATCC BAA-1098 / SB2B).